The sequence spans 84 residues: RNA-binding protein Hfq (84 aa).

The Sm domain occupies 10 to 69 (EPFLNTLRREHVPVSIYLVNGIKLQGQIESFDQYVVLLRNTVTQMVFKHAISTIVPGRAV).

It belongs to the Hfq family. As to quaternary structure, homohexamer.

Functionally, RNA chaperone that binds small regulatory RNA (sRNAs) and mRNAs to facilitate mRNA translational regulation in response to envelope stress, environmental stress and changes in metabolite concentrations. Also binds with high specificity to tRNAs. This is RNA-binding protein Hfq from Verminephrobacter eiseniae (strain EF01-2).